A 536-amino-acid polypeptide reads, in one-letter code: Phosphoenolpyruvate carboxykinase (ATP) (536 aa).

Substrate-binding residues include Arg-61, Tyr-195, and Lys-201. ATP-binding positions include Lys-201, His-220, and 236–244; that span reads GLSGTGKTT. The Mn(2+) site is built by Lys-201 and His-220. Asp-257 is a Mn(2+) binding site. Positions 285, 322, and 447 each coordinate ATP. Arg-322 provides a ligand contact to substrate.

The protein belongs to the phosphoenolpyruvate carboxykinase (ATP) family. Mn(2+) is required as a cofactor.

The protein localises to the cytoplasm. The catalysed reaction is oxaloacetate + ATP = phosphoenolpyruvate + ADP + CO2. It functions in the pathway carbohydrate biosynthesis; gluconeogenesis. Its function is as follows. Involved in the gluconeogenesis. Catalyzes the conversion of oxaloacetate (OAA) to phosphoenolpyruvate (PEP) through direct phosphoryl transfer between the nucleoside triphosphate and OAA. This is Phosphoenolpyruvate carboxykinase (ATP) from Brucella anthropi (strain ATCC 49188 / DSM 6882 / CCUG 24695 / JCM 21032 / LMG 3331 / NBRC 15819 / NCTC 12168 / Alc 37) (Ochrobactrum anthropi).